Consider the following 232-residue polypeptide: Probable caffeoyl-CoA O-methyltransferase At4g26220 (232 aa).

Residue Lys7 participates in substrate binding. S-adenosyl-L-methionine is bound by residues Thr49, Glu71, 73–74, Ser79, Asp97, and Ala126; that span reads GV. A substrate-binding site is contributed by Asp149. Position 149 (Asp149) interacts with a divalent metal cation. S-adenosyl-L-methionine is bound at residue Asp151. A divalent metal cation-binding residues include Asp175 and Asn176.

It belongs to the class I-like SAM-binding methyltransferase superfamily. Cation-dependent O-methyltransferase family. CCoAMT subfamily. Requires a divalent metal cation as cofactor.

The enzyme catalyses (E)-caffeoyl-CoA + S-adenosyl-L-methionine = (E)-feruloyl-CoA + S-adenosyl-L-homocysteine + H(+). It functions in the pathway aromatic compound metabolism; phenylpropanoid biosynthesis. Functionally, methylates caffeoyl-CoA to feruloyl-CoA and 5-hydroxyferuloyl-CoA to sinapoyl-CoA. Plays a role in the synthesis of feruloylated polysaccharides. Involved in the reinforcement of the plant cell wall. Also involved in the responding to wounding or pathogen challenge by the increased formation of cell wall-bound ferulic acid polymers. This is Probable caffeoyl-CoA O-methyltransferase At4g26220 from Arabidopsis thaliana (Mouse-ear cress).